The sequence spans 707 residues: Vicilin-like seed storage protein At2g18540 (707 aa).

The N-terminal stretch at 1–24 (MSRFRILPLSIFLCFVSLFFCTES) is a signal peptide. In terms of domain architecture, Cupin type-1 1 spans 42 to 185 (PLLVKKDQRT…AFAVPEDILR (144 aa)). Residues asparagine 60, asparagine 203, asparagine 285, asparagine 356, asparagine 396, and asparagine 399 are each glycosylated (N-linked (GlcNAc...) asparagine). Residues 247 to 403 (FNVFEEDPDF…SFNLSNETIK (157 aa)) enclose the Cupin type-1 2 domain. Positions 439–696 (EEEEIERRRK…KKEEEEEKRR (258 aa)) are enriched in basic and acidic residues. The tract at residues 439–707 (EEEEIERRRK…PPQPKPPEEI (269 aa)) is disordered. The span at 698–707 (PPQPKPPEEI) shows a compositional bias: pro residues.

Belongs to the 7S seed storage protein family.

In terms of biological role, seed storage protein. This is Vicilin-like seed storage protein At2g18540 from Arabidopsis thaliana (Mouse-ear cress).